A 230-amino-acid chain; its full sequence is Cytochrome c oxidase subunit 2 (230 aa).

Over 1–14 the chain is Mitochondrial intermembrane; sequence MAHPTQLGFQDAAS. A helical membrane pass occupies residues 15–45; it reads PVMEELLHFHDHALMIVFLISALVLYVIITT. Topologically, residues 46-59 are mitochondrial matrix; sequence VSTKLTNMYILDSQ. Residues 60–87 traverse the membrane as a helical segment; it reads EIEIVWTVLPALILILIALPSLRILYLM. At 88–230 the chain is on the mitochondrial intermembrane side; that stretch reads DEINDPHLTI…NWSTLMLKDA (143 aa). Positions 161, 196, 198, 200, 204, and 207 each coordinate Cu cation. Glutamate 198 is a Mg(2+) binding site.

This sequence belongs to the cytochrome c oxidase subunit 2 family. Component of the cytochrome c oxidase (complex IV, CIV), a multisubunit enzyme composed of 14 subunits. The complex is composed of a catalytic core of 3 subunits MT-CO1, MT-CO2 and MT-CO3, encoded in the mitochondrial DNA, and 11 supernumerary subunits COX4I, COX5A, COX5B, COX6A, COX6B, COX6C, COX7A, COX7B, COX7C, COX8 and NDUFA4, which are encoded in the nuclear genome. The complex exists as a monomer or a dimer and forms supercomplexes (SCs) in the inner mitochondrial membrane with NADH-ubiquinone oxidoreductase (complex I, CI) and ubiquinol-cytochrome c oxidoreductase (cytochrome b-c1 complex, complex III, CIII), resulting in different assemblies (supercomplex SCI(1)III(2)IV(1) and megacomplex MCI(2)III(2)IV(2)). Found in a complex with TMEM177, COA6, COX18, COX20, SCO1 and SCO2. Interacts with TMEM177 in a COX20-dependent manner. Interacts with COX20. Interacts with COX16. Requires Cu cation as cofactor.

Its subcellular location is the mitochondrion inner membrane. The catalysed reaction is 4 Fe(II)-[cytochrome c] + O2 + 8 H(+)(in) = 4 Fe(III)-[cytochrome c] + 2 H2O + 4 H(+)(out). Functionally, component of the cytochrome c oxidase, the last enzyme in the mitochondrial electron transport chain which drives oxidative phosphorylation. The respiratory chain contains 3 multisubunit complexes succinate dehydrogenase (complex II, CII), ubiquinol-cytochrome c oxidoreductase (cytochrome b-c1 complex, complex III, CIII) and cytochrome c oxidase (complex IV, CIV), that cooperate to transfer electrons derived from NADH and succinate to molecular oxygen, creating an electrochemical gradient over the inner membrane that drives transmembrane transport and the ATP synthase. Cytochrome c oxidase is the component of the respiratory chain that catalyzes the reduction of oxygen to water. Electrons originating from reduced cytochrome c in the intermembrane space (IMS) are transferred via the dinuclear copper A center (CU(A)) of subunit 2 and heme A of subunit 1 to the active site in subunit 1, a binuclear center (BNC) formed by heme A3 and copper B (CU(B)). The BNC reduces molecular oxygen to 2 water molecules using 4 electrons from cytochrome c in the IMS and 4 protons from the mitochondrial matrix. In Formosania lacustris (Oriental stream loach), this protein is Cytochrome c oxidase subunit 2 (mt-co2).